A 285-amino-acid polypeptide reads, in one-letter code: SLAM family member 8 (285 aa).

The signal sequence occupies residues 1–22 (MVMRPLWSLLLWEALLPITVTG). The Extracellular portion of the chain corresponds to 23-233 (AQVLSKVGGS…AAPGKASYKD (211 aa)). Asparagine 85 carries an N-linked (GlcNAc...) asparagine glycan. Positions 128–215 (PVVQVFIAVE…PVSWDLATVT (88 aa)) constitute an Ig-like C2-type domain. Cysteine 152 and cysteine 201 form a disulfide bridge. Residues 234-254 (VLLVVVPVSLLLMLVTLFSAW) traverse the membrane as a helical segment. Residues 255 to 285 (HWCPCSGKKKKDVHADRVGPETENPLVQDLP) are Cytoplasmic-facing. Positions 262–285 (KKKKDVHADRVGPETENPLVQDLP) are disordered.

In terms of tissue distribution, expressed in lymph node, spleen, thymus and bone marrow.

The protein localises to the membrane. In terms of biological role, may play a role in B-lineage commitment and/or modulation of signaling through the B-cell receptor. In Homo sapiens (Human), this protein is SLAM family member 8 (SLAMF8).